Reading from the N-terminus, the 380-residue chain is MSTSNLFNTVPFGKNVLNHKIVLSPMTRFRADDNGVPLSYMKTFYAQRASVRGTLLVTDAVAICPRTKGFPNVPGIWNKDQIAAWKEVVDEVHSKGSFIWLQLWATGRAADLEALTSQGLKLESSSEVPVAPGEPTPRALDEDEIQQYILDYVQGAKNAVHGAGFDGVEIHGANGFLVDQFLQSSCNRRTDQWGGSIENRSRFGLEITRGVVDAVGHDRVGMKLSPWSTFQGMGTMDDLVPQFEHFITCLREMDIAYLHLANSRWVEEEDPSIRTHPDFHNQTFVQMWGKKRPILLAGGYDPDSARRLVDQTYSDRNNVLVVFGRHYISNPDLPFRLRMGIALQKYNRDTFYIPCSGEGYVDYPFCKEYLDQADEAAVAG.

Residues P25–T27, A60, Q102, and H171 contribute to the FMN site. Residues H171 and N174 each contribute to the substrate site. FMN is bound by residues K223, G299, G324 to R325, and R325. Y352 is a substrate binding site.

Belongs to the NADH:flavin oxidoreductase/NADH oxidase family.

In terms of biological role, probable inactive dehydrogenase; part of the gene cluster that mediates the biosynthesis of fungal ergot alkaloid. DmaW catalyzes the first step of ergot alkaloid biosynthesis by condensing dimethylallyl diphosphate (DMAP) and tryptophan to form 4-dimethylallyl-L-tryptophan. The second step is catalyzed by the methyltransferase easF that methylates 4-dimethylallyl-L-tryptophan in the presence of S-adenosyl-L-methionine, resulting in the formation of 4-dimethylallyl-L-abrine. The catalase easC and the FAD-dependent oxidoreductase easE then transform 4-dimethylallyl-L-abrine to chanoclavine-I which is further oxidized by easD in the presence of NAD(+), resulting in the formation of chanoclavine-I aldehyde. Agroclavine dehydrogenase easG then mediates the conversion of chanoclavine-I aldehyde to agroclavine via a non-enzymatic adduct reaction: the substrate is an iminium intermediate that is formed spontaneously from chanoclavine-I aldehyde in the presence of glutathione. The presence of easA is not required to complete this reaction. Further conversion of agroclavine to paspalic acid is a two-step process involving oxidation of agroclavine to elymoclavine and of elymoclavine to paspalic acid, the second step being performed by the elymoclavine oxidase cloA. Paspalic acid is then further converted to D-lysergic acid. Ergopeptines are assembled from D-lysergic acid and three different amino acids by the D-lysergyl-peptide-synthetases composed each of a monomudular and a trimodular nonribosomal peptide synthetase subunit. LpsB and lpsC encode the monomodular subunits responsible for D-lysergic acid activation and incorporation into the ergopeptine backbone. LpsA1 and A2 subunits encode the trimodular nonribosomal peptide synthetase assembling the tripeptide portion of ergopeptines. LpsA1 is responsible for formation of the major ergopeptine, ergotamine, and lpsA2 for alpha-ergocryptine, the minor ergopeptine of the total alkaloid mixture elaborated by C.purpurea. D-lysergyl-tripeptides are assembled by the nonribosomal peptide synthetases and released as N-(D-lysergyl-aminoacyl)-lactams. Cyclolization of the D-lysergyl-tripeptides is performed by the Fe(2+)/2-ketoglutarate-dependent dioxygenase easH which introduces a hydroxyl group into N-(D-lysergyl-aminoacyl)-lactam at alpha-C of the aminoacyl residue followed by spontaneous condensation with the terminal lactam carbonyl group. This Claviceps purpurea (strain 20.1) (Ergot fungus) protein is Probable inactive dehydrogenase easA.